An 893-amino-acid chain; its full sequence is UPF0182 protein CLM_0018 (893 aa).

7 helical membrane-spanning segments follow: residues 9 to 29 (IPLF…NFII), 49 to 69 (AIII…WMYY), 94 to 114 (LFFI…SSSY), 154 to 174 (VIIS…FILE), 202 to 222 (LAIV…IKIW), 246 to 266 (FYKI…LSIV), and 273 to 293 (VSVC…ASFL).

It belongs to the UPF0182 family.

It is found in the cell membrane. The sequence is that of UPF0182 protein CLM_0018 from Clostridium botulinum (strain Kyoto / Type A2).